We begin with the raw amino-acid sequence, 408 residues long: Na(+)/H(+) antiporter NhaA 2 (408 aa).

The next 11 membrane-spanning stretches (helical) occupy residues 36–56 (GILL…GLGV), 79–99 (ILLW…GLEI), 115–135 (ALPV…YFLF), 145–165 (GWGI…SLLG), 174–194 (IFLA…IAVF), 197–217 (SELH…LMVF), 225–245 (LFFY…SGIH), 281–301 (FIIM…SEML), 310–330 (LGII…MSWL), 348–368 (VLGL…IALL), and 381–401 (FAIL…LSSY).

The protein belongs to the NhaA Na(+)/H(+) (TC 2.A.33) antiporter family.

The protein resides in the cell inner membrane. The catalysed reaction is Na(+)(in) + 2 H(+)(out) = Na(+)(out) + 2 H(+)(in). Its function is as follows. Na(+)/H(+) antiporter that extrudes sodium in exchange for external protons. The protein is Na(+)/H(+) antiporter NhaA 2 of Flavobacterium johnsoniae (strain ATCC 17061 / DSM 2064 / JCM 8514 / BCRC 14874 / CCUG 350202 / NBRC 14942 / NCIMB 11054 / UW101) (Cytophaga johnsonae).